We begin with the raw amino-acid sequence, 67 residues long: uncharacterized protein (67 aa).

This is an uncharacterized protein from Dictyostelium discoideum (Social amoeba).